The primary structure comprises 397 residues: Argininosuccinate synthase (397 aa).

8–16 contacts ATP; it reads AYSGGLDTS. Positions 86 and 91 each coordinate L-citrulline. ATP is bound at residue glycine 116. Positions 118, 122, and 123 each coordinate L-aspartate. Asparagine 122 is a binding site for L-citrulline. 5 residues coordinate L-citrulline: arginine 126, serine 175, serine 184, glutamate 260, and tyrosine 272.

This sequence belongs to the argininosuccinate synthase family. Type 1 subfamily. Homotetramer.

Its subcellular location is the cytoplasm. The catalysed reaction is L-citrulline + L-aspartate + ATP = 2-(N(omega)-L-arginino)succinate + AMP + diphosphate + H(+). The protein operates within amino-acid biosynthesis; L-arginine biosynthesis; L-arginine from L-ornithine and carbamoyl phosphate: step 2/3. The sequence is that of Argininosuccinate synthase from Clostridium botulinum (strain Okra / Type B1).